The sequence spans 122 residues: Small ribosomal subunit protein uS13 (122 aa).

The interval 99 to 122 is disordered; the sequence is RGQRTHTNARTRKGPAKAIAGKKK.

The protein belongs to the universal ribosomal protein uS13 family. As to quaternary structure, part of the 30S ribosomal subunit. Forms a loose heterodimer with protein S19. Forms two bridges to the 50S subunit in the 70S ribosome.

In terms of biological role, located at the top of the head of the 30S subunit, it contacts several helices of the 16S rRNA. In the 70S ribosome it contacts the 23S rRNA (bridge B1a) and protein L5 of the 50S subunit (bridge B1b), connecting the 2 subunits; these bridges are implicated in subunit movement. Contacts the tRNAs in the A and P-sites. This Rhizobium etli (strain ATCC 51251 / DSM 11541 / JCM 21823 / NBRC 15573 / CFN 42) protein is Small ribosomal subunit protein uS13.